The chain runs to 385 residues: Cytochrome b (385 aa).

A run of 4 helical transmembrane segments spans residues 32–52 (MGSLLGLCLVIQIVTGIFMAM), 76–98 (YILRYLHANGASFFFMVMFMHMA), 113–133 (LWNVGVIIFILTIATAFLGYC), and 179–199 (FFALHYLVPFIIAAMVIMHLM). The heme b site is built by H82 and H96. Heme b is bound by residues H183 and H197. H202 contacts a ubiquinone. 4 consecutive transmembrane segments (helical) span residues 225 to 245 (FIFKDLVTVFLFMLILALFVF), 289 to 309 (LLGVITMFAAILVLLVLPFTD), 321 to 341 (LSKFFFFIFVFNFVLLGQIGA), and 348 to 368 (YVLMGQIATFIYFAYFLIIVP).

It belongs to the cytochrome b family. As to quaternary structure, fungal cytochrome b-c1 complex contains 10 subunits; 3 respiratory subunits, 2 core proteins and 5 low-molecular weight proteins. Cytochrome b-c1 complex is a homodimer. Requires heme b as cofactor.

The protein resides in the mitochondrion inner membrane. Its function is as follows. Component of the ubiquinol-cytochrome c reductase complex (complex III or cytochrome b-c1 complex) that is part of the mitochondrial respiratory chain. The b-c1 complex mediates electron transfer from ubiquinol to cytochrome c. Contributes to the generation of a proton gradient across the mitochondrial membrane that is then used for ATP synthesis. The protein is Cytochrome b (COB) of Saccharomyces paradoxus (Yeast).